We begin with the raw amino-acid sequence, 273 residues long: Putative phosphoenolpyruvate synthase regulatory protein (273 aa).

153–160 (GVSRCGKT) provides a ligand contact to ADP.

It belongs to the pyruvate, phosphate/water dikinase regulatory protein family. PSRP subfamily.

The catalysed reaction is [pyruvate, water dikinase] + ADP = [pyruvate, water dikinase]-phosphate + AMP + H(+). The enzyme catalyses [pyruvate, water dikinase]-phosphate + phosphate + H(+) = [pyruvate, water dikinase] + diphosphate. In terms of biological role, bifunctional serine/threonine kinase and phosphorylase involved in the regulation of the phosphoenolpyruvate synthase (PEPS) by catalyzing its phosphorylation/dephosphorylation. This is Putative phosphoenolpyruvate synthase regulatory protein from Yersinia pseudotuberculosis serotype I (strain IP32953).